The following is a 57-amino-acid chain: DNA gyrase inhibitor YacG (57 aa).

Zn(2+) is bound by residues Cys10, Cys13, Cys25, and Cys29.

This sequence belongs to the DNA gyrase inhibitor YacG family. Interacts with GyrB. It depends on Zn(2+) as a cofactor.

Functionally, inhibits all the catalytic activities of DNA gyrase by preventing its interaction with DNA. Acts by binding directly to the C-terminal domain of GyrB, which probably disrupts DNA binding by the gyrase. The polypeptide is DNA gyrase inhibitor YacG (Brucella melitensis biotype 1 (strain ATCC 23456 / CCUG 17765 / NCTC 10094 / 16M)).